Here is a 346-residue protein sequence, read N- to C-terminus: N-acetyl-gamma-glutamyl-phosphate reductase (346 aa).

Cysteine 151 is a catalytic residue.

It belongs to the NAGSA dehydrogenase family. Type 1 subfamily.

The protein resides in the cytoplasm. It catalyses the reaction N-acetyl-L-glutamate 5-semialdehyde + phosphate + NADP(+) = N-acetyl-L-glutamyl 5-phosphate + NADPH + H(+). It functions in the pathway amino-acid biosynthesis; L-arginine biosynthesis; N(2)-acetyl-L-ornithine from L-glutamate: step 3/4. Functionally, catalyzes the NADPH-dependent reduction of N-acetyl-5-glutamyl phosphate to yield N-acetyl-L-glutamate 5-semialdehyde. This Ehrlichia canis (strain Jake) protein is N-acetyl-gamma-glutamyl-phosphate reductase.